We begin with the raw amino-acid sequence, 478 residues long: Transcription factor PIF1 (478 aa).

At T10 the chain carries Phosphothreonine; by CK2. 5 disordered regions span residues 56–80, 122–144, 172–210, 230–294, and 391–478; these read LHTKKPSSSPPKLLPSMDPQQQPSS, VSQVTAARPPVSSTNESRPPVRN, VRESTQVSPSATPSAAASESGLTRRTDGTDSSAVAGGGA, TSSS…LSER, and TQTH…HTTG. A compositionally biased stretch (low complexity) spans 69 to 80; that stretch reads LPSMDPQQQPSS. Residues 179-189 are compositionally biased toward low complexity; sequence SPSATPSAAAS. A Phosphothreonine; by CK2 modification is found at T197. A Phosphoserine; by CK2 modification is found at S202. Composition is skewed to basic and acidic residues over residues 238 to 272 and 284 to 294; these read SEIEPEKTNVDDRKRKEREATTTDETESRSEETKQ and RAAEVHNLSER. A bHLH domain is found at 284 to 333; that stretch reads RAAEVHNLSERKRRDRINERMKALQELIPRCNKSDKASMLDEAIEYMKSL. A compositionally biased stretch (polar residues) spans 415-426; it reads PNQQYDPTSGQP. 4 positions are modified to phosphoserine; by CK2: S464, S465, S466, and S469. Positions 465 to 478 are enriched in basic and acidic residues; that stretch reads SSKESEDHGNHTTG.

Homodimer. Interacts with the photoactivated conformer (Pfr) of phytochromes A and B, PHYA and PHYB. Also interacts with APRR1/TOC1. Binds to RGL2, RGA and FHY3 (via N-terminus). Associates to PTAC12/HMR/PAP5 which acts as a transcriptional coactivator. Binds directly to PCH1 and PCHL; this interaction facilitates its association with phyB and its subsequent light-induced degradation. Phosphorylated at Thr-10, Thr-197, Ser-202, Ser-464, Ser-465, Ser-466 and Ser-469 by CK2. Phosphorylated and ubiquitinated after an exposure to light (especially red and far-red), in a phytochrome-dependent manner. Modified proteins undergo a proteasome-dependent degradation. Its stability and degradation plays a central role in photomorphogenesis of seedlings. Mainly expressed in leaves, stems and seedlings, and, to a lower extent, in fruits, flowers and roots.

It is found in the nucleus. DNA-binding ability is inhibited by PCH1 and PCHL to negatively regulate the expressions of its target genes. Its function is as follows. Transcription activator. Negatively regulates chlorophyll biosynthesis and seed germination in the dark, and lightinduced degradation of PIF1 relieves this negative regulation to promote photomorphogenesis. Binds to the G-box motif (5'-CACGTG-3') found in many light-regulated promoters. Promotes the expression of SOM, and thus modulates responses to abscisic acid (ABA) and gibberellic acid (GA). The polypeptide is Transcription factor PIF1 (Arabidopsis thaliana (Mouse-ear cress)).